The primary structure comprises 797 residues: LPS-assembly protein LptD (797 aa).

Positions 1 to 30 (MKEGRKRLRAGYCYMLAGVVGVASTGSSRA) are cleaved as a signal peptide.

The protein belongs to the LptD family. Component of the lipopolysaccharide transport and assembly complex. Interacts with LptE and LptA.

The protein resides in the cell outer membrane. Together with LptE, is involved in the assembly of lipopolysaccharide (LPS) at the surface of the outer membrane. This Hahella chejuensis (strain KCTC 2396) protein is LPS-assembly protein LptD.